Consider the following 361-residue polypeptide: MADTKGFSSIETPGYVGFANLPNQVHRKSVKKGFEFTLMVVGESGLGKSTLVNSLFLTDLYPERIIPDAIEKQKQTVKLEASTVEIEERGVKLRLTVVDTPGFGDAIDNSNSFGAILEYIDEQYERFLRDESGLNRRNIVDNRIHCCFYFISPFGHGLKPLDVEFMKKLHSKVNIVPVIAKADCLTKKEILRLKCRIMQEIESHGIKIYPLPDCDSDEDEDYKEQVKQLKEAVPFAVCGANTLLEVKGKKVRGRLYPWGVVEVENPDHCDFIKLRTMLITHMQDLQEVTQEVHYENYRSDRLAKGIKGKENGVKAERDSSSQVVSNSVLGEKDRILQEKEAELRRMQEMLAQMQARMQAQQ.

The 273-residue stretch at 32–304 folds into the Septin-type G domain; it reads KGFEFTLMVV…ENYRSDRLAK (273 aa). A G1 motif region spans residues 42–49; the sequence is GESGLGKS. GTP-binding positions include 42–49, threonine 76, glycine 102, 181–189, glycine 239, and arginine 254; these read GESGLGKS and KADCLTKKE. The tract at residues 99–102 is G3 motif; sequence DTPG. A G4 motif region spans residues 180 to 183; sequence AKAD. Residue serine 319 is modified to Phosphoserine.

This sequence belongs to the TRAFAC class TrmE-Era-EngA-EngB-Septin-like GTPase superfamily. Septin GTPase family. In terms of assembly, likely part of a multicomponent septin complex that includes pnut. Interacts with pnut. Interacts with park. Ubiquitinated by park, leading to its degradation by the proteasome. In terms of tissue distribution, accumulates at the leading edge of the cleavage furrow in dividing cells and cellularizing embryos (at protein level). Also accumulates at the leading edge of the embryo epithelium during dorsal closure, in the embryonic neurons, and at the baso-lateral surfaces of ovarian follicle cells (at protein level).

Its subcellular location is the cytoplasm. Functionally, involved in cytokinesis. May be involved in p53-dependent apoptosis. This is Septin-1 from Drosophila melanogaster (Fruit fly).